The following is a 308-amino-acid chain: Elongation factor Ts (308 aa).

The segment at Thr-80–Val-83 is involved in Mg(2+) ion dislocation from EF-Tu.

It belongs to the EF-Ts family.

The protein resides in the cytoplasm. Associates with the EF-Tu.GDP complex and induces the exchange of GDP to GTP. It remains bound to the aminoacyl-tRNA.EF-Tu.GTP complex up to the GTP hydrolysis stage on the ribosome. In Rhizobium leguminosarum bv. trifolii (strain WSM2304), this protein is Elongation factor Ts.